The sequence spans 271 residues: Delta(3,5)-Delta(2,4)-dienoyl-CoA isomerase (271 aa).

Substrate is bound by residues 62-66 (SGGKF) and Leu-120. Glu-152 (proton donor/acceptor) is an active-site residue. The Peroxisome targeting signal (PTS1) signature appears at 269-271 (HKL).

This sequence belongs to the enoyl-CoA hydratase/isomerase family. As to quaternary structure, interacts with ECI1.

The protein localises to the peroxisome. It carries out the reaction a (3E,5Z)-dienoyl-CoA = a (2E,4E)-(5,6-saturated)-dienoyl-CoA. It participates in lipid metabolism; fatty acid beta-oxidation. Functionally, peroxisomal di-isomerase that is involved in fatty acid metabolism enzyme by converting 3,5-dienoyl-CoAs to the corresponding 2,4-dienoyl-CoAs. Required for ECI1 to be located to the peroxisome. The sequence is that of Delta(3,5)-Delta(2,4)-dienoyl-CoA isomerase from Saccharomyces cerevisiae (strain ATCC 204508 / S288c) (Baker's yeast).